Consider the following 298-residue polypeptide: ATP synthase gamma chain (298 aa).

Belongs to the ATPase gamma chain family. F-type ATPases have 2 components, CF(1) - the catalytic core - and CF(0) - the membrane proton channel. CF(1) has five subunits: alpha(3), beta(3), gamma(1), delta(1), epsilon(1). CF(0) has three main subunits: a, b and c.

The protein resides in the cell inner membrane. Functionally, produces ATP from ADP in the presence of a proton gradient across the membrane. The gamma chain is believed to be important in regulating ATPase activity and the flow of protons through the CF(0) complex. In Desulforapulum autotrophicum (strain ATCC 43914 / DSM 3382 / VKM B-1955 / HRM2) (Desulfobacterium autotrophicum), this protein is ATP synthase gamma chain.